A 169-amino-acid chain; its full sequence is Probable inosine/xanthosine triphosphatase (169 aa).

Asp-58 is a binding site for Mg(2+).

This sequence belongs to the YjjX NTPase family. As to quaternary structure, homodimer. Mg(2+) is required as a cofactor. Mn(2+) serves as cofactor.

The catalysed reaction is XTP + H2O = XDP + phosphate + H(+). It catalyses the reaction ITP + H2O = IDP + phosphate + H(+). In terms of biological role, phosphatase that hydrolyzes non-canonical purine nucleotides such as XTP and ITP to their respective diphosphate derivatives. Probably excludes non-canonical purines from DNA/RNA precursor pool, thus preventing their incorporation into DNA/RNA and avoiding chromosomal lesions. This Archaeoglobus fulgidus (strain ATCC 49558 / DSM 4304 / JCM 9628 / NBRC 100126 / VC-16) protein is Probable inosine/xanthosine triphosphatase.